Reading from the N-terminus, the 531-residue chain is Cation transporter HKT1;3 (531 aa).

Residues 1–46 (MNHCLVVSHKKLQTFRTFAASKFSSFTKSAQKSIKYSFQFIYQNNP) are Cytoplasmic-facing. 2 consecutive transmembrane segments (helical) span residues 47-67 (LFVH…SLKV) and 108-128 (LWVL…MLGI). The Cytoplasmic portion of the chain corresponds to 129–190 (HFMRAEFGTK…GGHVEPKTIK (62 aa)). Transmembrane regions (helical) follow at residues 191–211 (FLGF…SLLI) and 264–284 (ILLL…APCL). The Cytoplasmic portion of the chain corresponds to 285 to 321 (RLMVWSLEKITGKKDCRYILEYPKAIGYKHLMSTRES). The next 2 membrane-spanning stretches (helical) occupy residues 322-342 (VYLT…FLSL) and 383-403 (SAIL…SFLP). The Cytoplasmic segment spans residues 404-421 (RHDGEDSKTEKINKRKGL). The next 2 membrane-spanning stretches (helical) occupy residues 422–442 (LENW…LICI) and 494–514 (YGFA…VMLF). Residues 515 to 530 (GRLKTFNMKGGRAWKL) are Cytoplasmic-facing.

The protein belongs to the TrkH potassium transport family. HKT (TC 2.A.38.3) subfamily. In terms of assembly, interacts with CNIH1. Weakly expressed. In roots, expressed in epidermis, exodermis, cortex, and sieve elements and companion cells of phloem. In mature leaves, expressed in large highly vacuolated cells of the adaxial epidermis, phloem and xylem.

Its subcellular location is the endoplasmic reticulum membrane. It localises to the golgi apparatus membrane. It carries out the reaction Na(+)(in) = Na(+)(out). Functions as a highly-selective sodium transporter. Does not seem to function as sodium-potassium cotransporter. May be involved in turgor changes for rolling and unrolling of leaves in response to environmental variations. This Oryza sativa subsp. japonica (Rice) protein is Cation transporter HKT1;3.